The chain runs to 333 residues: CMP-N-acetylneuraminate-beta-galactosamide-alpha-2,3-sialyltransferase 4 (333 aa).

The Cytoplasmic segment spans residues 1 to 8 (MTSKSHWK). A helical; Signal-anchor for type II membrane protein membrane pass occupies residues 9–26 (LLALALVLVVVMVWYSIS). The Lumenal portion of the chain corresponds to 27–333 (REDRYIEFFY…MGAVKNLTYF (307 aa)). N-linked (GlcNAc...) asparagine glycosylation is found at Asn-61, Asn-131, Asn-310, and Asn-329. Cysteines 120 and 273 form a disulfide.

The protein belongs to the glycosyltransferase 29 family.

The protein localises to the golgi apparatus. Its subcellular location is the golgi stack membrane. The enzyme catalyses a beta-D-galactosyl-(1-&gt;3)-N-acetyl-beta-D-galactosaminyl derivative + CMP-N-acetyl-beta-neuraminate = an N-acetyl-alpha-neuraminyl-(2-&gt;3)-beta-D-galactosyl-(1-&gt;3)-N-acetyl-beta-D-galactosaminyl derivative + CMP + H(+). It carries out the reaction a beta-D-galactosyl-(1-&gt;3)-N-acetyl-alpha-D-galactosaminyl derivative + CMP-N-acetyl-beta-neuraminate = an N-acetyl-alpha-neuraminyl-(2-&gt;3)-beta-D-galactosyl-(1-&gt;3)-N-acetyl-alpha-D-galactosaminyl derivative + CMP + H(+). The catalysed reaction is a beta-D-galactosyl-(1-&gt;4)-N-acetyl-beta-D-glucosaminyl derivative + CMP-N-acetyl-beta-neuraminate = an N-acetyl-alpha-neuraminyl-(2-&gt;3)-beta-D-galactosyl-(1-&gt;4)-N-acetyl-beta-D-glucosaminyl derivative + CMP + H(+). It catalyses the reaction a ganglioside GM1 (d18:1(4E)) + CMP-N-acetyl-beta-neuraminate = a ganglioside GD1a (d18:1(4E)) + CMP + H(+). The enzyme catalyses a ganglioside GA1 (d18:1(4E)) + CMP-N-acetyl-beta-neuraminate = a ganglioside GM1b (d18:1(4E)) + CMP + H(+). It carries out the reaction a ganglioside GT1c (d18:1(4E)) + CMP-N-acetyl-beta-neuraminate = a ganglioside GQ1c (d18:1(4E)) + CMP + H(+). The catalysed reaction is a neolactoside nLc4Cer + CMP-N-acetyl-beta-neuraminate = a neolactoside IV(3)-alpha-NeuAc-nLc4Cer + CMP + H(+). It catalyses the reaction a neolactoside nLc4Cer(d18:1(4E)) + CMP-N-acetyl-beta-neuraminate = a neolactoside IV(3)-alpha-NeuAc-nLc4Cer(d18:1(4E)) + CMP + H(+). Its pathway is protein modification; protein glycosylation. It participates in glycolipid biosynthesis. In terms of biological role, a beta-galactoside alpha2-3 sialyltransferase involved in terminal sialylation of glycoproteins and glycolipids. Catalyzes the transfer of sialic acid (N-acetyl-neuraminic acid; Neu5Ac) from the nucleotide sugar donor CMP-Neu5Ac onto acceptor Galbeta-(1-&gt;3)-GalNAc- and Galbeta-(1-&gt;4)-GlcNAc-terminated glycoconjugates through an alpha2-3 linkage. Plays a major role in hemostasis. Responsible for sialylation of plasma VWF/von Willebrand factor, preventing its recognition by asialoglycoprotein receptors (ASGPR) and subsequent clearance. Regulates ASGPR-mediated clearance of platelets. Participates in the biosynthesis of the sialyl Lewis X epitopes, both on O- and N-glycans, which are recognized by SELE/E-selectin, SELP/P-selectin and SELL/L-selectin. Essential for selectin-mediated rolling and adhesion of leukocytes during extravasation. Contributes to adhesion and transendothelial migration of neutrophils likely through terminal sialylation of CXCR2. In glycosphingolipid biosynthesis, sialylates GM1 and GA1 gangliosides to form GD1a and GM1b, respectively. Metabolizes brain c-series ganglioside GT1c forming GQ1c. Synthesizes ganglioside LM1 (IV3Neu5Ac-nLc4Cer), a major structural component of peripheral nerve myelin. The polypeptide is CMP-N-acetylneuraminate-beta-galactosamide-alpha-2,3-sialyltransferase 4 (St3gal4) (Rattus norvegicus (Rat)).